Reading from the N-terminus, the 561-residue chain is MKYIVMQDVFFVVLLLVLAVPLGIYMYKVMIGEKVFLSRVLEPVERFGYRLMGVSEVGMSAKRYAVSVLAFSAVGFVFVMAVLMLQGFLPLNPEGMKGLSFSLAFNTAASFVSNTNWQAYSGETALSYFSQSIGLTVQNFVSAATGIAVLFAVIRGFIWKKQKTVGNFWQDLFRVTLYILLPLSLVLALLLVSQGVVQSFADYSVVETLENGAKQLIPLGPAASQIAIKQLGTNGGGFFGANSAFPFENPSSFTNLIEMLAILLIPVALVVMFGRAVKDSKQGRAIMTAMMIVFVIGVVAITISEQFAGPHYQGVATSGSMEGKEVRFGVGGSSLFAASTTAASNGAVNAMHDSLTPLGGLVPMFFMQLGEVIFGGVGSGLYGMIGFIILTVFIAGLLVGRTPEYLGKKIEPYDMKMVCLLILVPPLLTLFGTAVAVMMPSVQASVSASGAHGFSEVLYAFTSMGNNNGSAFAGFAADTTFTNMVGAVMMLLARFIPLVAALYLAQNMAGKSSVAASSGTLSTKNGMFIGLLIGVVVLVGALSFLPALALGPIADFFTTFK.

The next 10 membrane-spanning stretches (helical) occupy residues 4 to 24, 65 to 85, 133 to 153, 177 to 197, 253 to 273, 285 to 305, 380 to 400, 417 to 437, 484 to 504, and 528 to 548; these read IVMQDVFFVVLLLVLAVPLGI, AVSVLAFSAVGFVFVMAVLML, IGLTVQNFVSAATGIAVLFAV, LYILLPLSLVLALLLVSQGVV, FTNLIEMLAILLIPVALVVMF, AIMTAMMIVFVIGVVAITISE, GLYGMIGFIILTVFIAGLLVG, MVCLLILVPPLLTLFGTAVAV, MVGAVMMLLARFIPLVAALYL, and FIGLLIGVVVLVGALSFLPAL.

This sequence belongs to the KdpA family. As to quaternary structure, the system is composed of three essential subunits: KdpA, KdpB and KdpC.

The protein localises to the cell membrane. Functionally, part of the high-affinity ATP-driven potassium transport (or Kdp) system, which catalyzes the hydrolysis of ATP coupled with the electrogenic transport of potassium into the cytoplasm. This subunit binds the extracellular potassium ions and delivers the ions to the membrane domain of KdpB through an intramembrane tunnel. In Listeria monocytogenes serotype 4a (strain HCC23), this protein is Potassium-transporting ATPase potassium-binding subunit.